A 213-amino-acid polypeptide reads, in one-letter code: ATP synthase peripheral stalk subunit OSCP, mitochondrial (213 aa).

The transit peptide at 1-23 (MAAPAASGLSRQVRSFSTSVVRP) directs the protein to the mitochondrion. Residues 5–23 (AASGLSRQVRSFSTSVVRP) carry the SIFI-degron motif. Lys54, Lys60, Lys70, and Lys73 each carry N6-acetyllysine. The residue at position 90 (Lys90) is an N6-succinyllysine. An N6-acetyllysine; alternate mark is found at Lys100, Lys158, and Lys162. N6-succinyllysine; alternate is present on residues Lys100, Lys158, and Lys162. 3 positions are modified to N6-acetyllysine: Lys172, Lys176, and Lys192. Position 199 is an N6-succinyllysine (Lys199).

The protein belongs to the ATPase delta chain family. As to quaternary structure, component of the ATP synthase complex composed at least of ATP5F1A/subunit alpha, ATP5F1B/subunit beta, ATP5MC1/subunit c (homooctomer), MT-ATP6/subunit a, MT-ATP8/subunit 8, ATP5ME/subunit e, ATP5MF/subunit f, ATP5MG/subunit g, ATP5MK/subunit k, ATP5MJ/subunit j, ATP5F1C/subunit gamma, ATP5F1D/subunit delta, ATP5F1E/subunit epsilon, ATP5PF/subunit F6, ATP5PB/subunit b, ATP5PD/subunit d, ATP5PO/subunit OSCP. ATP synthase complex consists of a soluble F(1) head domain (subunits alpha(3) and beta(3)) - the catalytic core - and a membrane F(0) domain - the membrane proton channel (subunits c, a, 8, e, f, g, k and j). These two domains are linked by a central stalk (subunits gamma, delta, and epsilon) rotating inside the F1 region and a stationary peripheral stalk (subunits F6, b, d, and OSCP). Acetylation of Lys-70 and Lys-158 is observed in liver mitochondria from fasted mice but not from fed mice. Post-translationally, acetylation at Lys-162 decreases ATP production. Deacetylated by SIRT3. In terms of processing, in response to mitochondrial stress, the precursor protein is ubiquitinated by the SIFI complex in the cytoplasm before mitochondrial import, leading to its degradation. Within the SIFI complex, UBR4 initiates ubiquitin chain that are further elongated or branched by KCMF1.

The protein localises to the mitochondrion. It is found in the mitochondrion inner membrane. Functionally, subunit OSCP, of the mitochondrial membrane ATP synthase complex (F(1)F(0) ATP synthase or Complex V) that produces ATP from ADP in the presence of a proton gradient across the membrane which is generated by electron transport complexes of the respiratory chain. ATP synthase complex consist of a soluble F(1) head domain - the catalytic core - and a membrane F(1) domain - the membrane proton channel. These two domains are linked by a central stalk rotating inside the F(1) region and a stationary peripheral stalk. During catalysis, ATP synthesis in the catalytic domain of F(1) is coupled via a rotary mechanism of the central stalk subunits to proton translocation. In vivo, can only synthesize ATP although its ATP hydrolase activity can be activated artificially in vitro. Part of the complex F(0) domain. Part of the complex F(0) domain and the peripheric stalk, which acts as a stator to hold the catalytic alpha(3)beta(3) subcomplex and subunit a/ATP6 static relative to the rotary elements. The chain is ATP synthase peripheral stalk subunit OSCP, mitochondrial from Mus musculus (Mouse).